The chain runs to 435 residues: Sulfopropanediol 3-dehydrogenase (435 aa).

NAD(+) is bound by residues Tyr119, Gln181, and Asn204. Positions 249 and 252 each coordinate Zn(2+). Active-site proton acceptor residues include Glu319 and His320. Zn(2+) is bound by residues Asp353 and His412.

It belongs to the histidinol dehydrogenase family. HpsN subfamily. It depends on Zn(2+) as a cofactor.

It catalyses the reaction (2R)-3-sulfopropanediol + 2 NAD(+) + H2O = (2R)-3-sulfolactate + 2 NADH + 3 H(+). Its function is as follows. Catalyzes the NAD-dependent oxidation of (R)-2,3-dihydroxypropane-1-sulfonate to (R)-3-sulfolactate. This chain is Sulfopropanediol 3-dehydrogenase, found in Ruegeria pomeroyi (strain ATCC 700808 / DSM 15171 / DSS-3) (Silicibacter pomeroyi).